The sequence spans 116 residues: Large ribosomal subunit protein bL20 (116 aa).

This sequence belongs to the bacterial ribosomal protein bL20 family.

Functionally, binds directly to 23S ribosomal RNA and is necessary for the in vitro assembly process of the 50S ribosomal subunit. It is not involved in the protein synthesizing functions of that subunit. This chain is Large ribosomal subunit protein bL20, found in Helicobacter pylori (strain P12).